Consider the following 174-residue polypeptide: Regenerating islet-derived protein 3-alpha (174 aa).

Positions 1 to 25 (MLPRLSFNNVSWTLLYYLFIFQVRG) are cleaved as a signal peptide. The propeptide occupies 26-36 (EDSQKAVPSTR). 3 cysteine pairs are disulfide-bonded: cysteine 39/cysteine 50, cysteine 67/cysteine 170, and cysteine 145/cysteine 162. Positions 46–171 (YRSYCYTLVT…CDVELPFVCK (126 aa)) constitute a C-type lectin domain. The interval 102-117 (WIWLHDPTMGQQPNGG) is sufficient to activate EXTL3. The Zn(2+) site is built by histidine 106 and glutamate 120.

Forms a hexameric membrane-permeabilizing oligomeric pore on membrane phospholipids. The hexamer is formed by three dimers related by helical symmetry. Forms filaments, filamentation traps pore complexes and limits damage to host cells. Interacts with EXTL3. Proteolytic processing by trypsin removes an inhibitory N-terminal propeptide and is essential for peptidoglycan binding and antibacterial activity. As to expression, low expression found in healthy pancreas.

It is found in the secreted. In terms of biological role, bactericidal C-type lectin. The lack of the EPN motif may explain its inability to bind peptidoglycan. Acts as a hormone in response to different stimuli like anti-inflammatory signals, such as IL17A, or gut microbiome. Secreted by different cell types to activate its receptor EXTL3 and induce cell specific signaling pathways. Induced by IL17A in keratinocytes, regulates keratinocyte proliferation and differentiation after skin injury via activation of EXTL3-PI3K-AKT signaling pathway. In parallel, inhibits skin inflammation through the inhibition of inflammatory cytokines such as IL6 and TNF. In pancreas, is able to permealize beta-cells membrane and stimulate their proliferation. The chain is Regenerating islet-derived protein 3-alpha (Reg3a) from Rattus norvegicus (Rat).